We begin with the raw amino-acid sequence, 1249 residues long: AMB antimetabolite synthetase AmbB (1249 aa).

The adenylation stretch occupies residues 245-633 (FEAQARRTPQ…LGRLDDQVKF (389 aa)). The disordered stretch occupies residues 716–735 (IDRKALPRPQATGAEPQALP). The Carrier domain occupies 734–809 (LPSDPLEQAL…ALLELLRQAA (76 aa)). The residue at position 768 (Ser768) is an O-(pantetheine 4'-phosphoryl)serine. The interval 823–1150 (GLSLAERRLW…CVTQALRQRG (328 aa)) is condensation.

This sequence belongs to the NRP synthetase family. Requires pantetheine 4'-phosphate as cofactor.

The catalysed reaction is holo-[peptidyl-carrier protein] + L-alanine + ATP = L-alanyl-[peptidyl-carrier protein] + AMP + diphosphate. Its function is as follows. Involved in the biosynthesis of the antimetabolite L-2-amino-4-methoxy-trans-3-butenoic acid (AMB), a non-proteinogenic amino acid which is toxic for prokaryotes and eukaryotes. Adenylates L-alanine and loads it onto its peptidyl carrier domain via a thioester linkage to the phosphopanthetheine moiety. In addition, loads activated L-Ala in trans onto the second carrier domain of AmbE. Can also activate L-Ser, Gly and D-Ala, albeit to a lower extent. The condensation domain of AmbB probably condenses the activated L-Ala and the L-Glu loaded on AmbE to form a L-Glu-L-Ala dipeptide at the first carrier domain of AmbE. The polypeptide is AMB antimetabolite synthetase AmbB (Pseudomonas aeruginosa (strain ATCC 15692 / DSM 22644 / CIP 104116 / JCM 14847 / LMG 12228 / 1C / PRS 101 / PAO1)).